The sequence spans 520 residues: Type I restriction enzyme EcoR124I/EcoR124II methylase subunit (520 aa).

Positions 10–190 (AELHRQIWQI…YEFLISNYAA (181 aa)) are N-terminal domain. Residues 198–203 (EFFTPQ), 230–232 (SGS), and glutamate 254 contribute to the S-adenosyl-L-methionine site. The tract at residues 198-473 (EFFTPQHVSK…NDYNLSVSSY (276 aa)) is catalytic domain. The tract at residues 481–510 (EIIDIAELNAELKTTVSKIDQLRKDIDAIV) is C-terminal tail.

This sequence belongs to the N(4)/N(6)-methyltransferase family. In terms of assembly, the type I restriction/modification system is composed of three polypeptides R, M and S; the restriction enzyme has stoichiometry R(2)M(2)S(1) while the methyltransferase is M(2)S(1). There is an equilibrium between R(2)M(2)S(1) and R(1)M(2)S(1); the latter is methylation and translocation proficient but restriction deficient. As to quaternary structure, (Microbial infection) Holoenenzyme interacts with Escherichia phage T7 protein Ocr; this interaction leads to the inhibition of the restriction activity, but may still allow methylation and translocation.

The enzyme catalyses a 2'-deoxyadenosine in DNA + S-adenosyl-L-methionine = an N(6)-methyl-2'-deoxyadenosine in DNA + S-adenosyl-L-homocysteine + H(+). In terms of biological role, the subtype gamma methyltransferase (M) subunit of a type I restriction enzyme. The M and S subunits together form a methyltransferase (MTase) that methylates A-3 on the top and bottom strand of the sequence 5'-GAAN(6)RTCG-3' (for EcoR124I) and 5'-GAAN(7)RTCG-3' (for EcoR124II). In the presence of the R subunit the complex can also act as an endonuclease, binding to the same target sequence but cutting the DNA some distance from this site. Whether the DNA is cut or modified depends on the methylation state of the target sequence. When the target site is unmodified, the DNA is cut. When the target site is hemimethylated, the complex acts as a maintenance MTase modifying the DNA so that both strands become methylated. After locating a non-methylated recognition site, the enzyme complex serves as a molecular motor that translocates DNA in an ATP-dependent manner until a collision occurs that triggers cleavage. The R(1)M(2)S(1) complex translocates an average of 555 bp/second on nicked DNA; the R(2)M(2)S(1) complex translocates at double that speed. The 2 R subunit motors are independent and track along the helical pitch of the DNA, inducing positive supercoiling ahead of themselves. The sequence is that of Type I restriction enzyme EcoR124I/EcoR124II methylase subunit (hsdM) from Escherichia coli.